Reading from the N-terminus, the 105-residue chain is MYVIVEINGQQFKAEEGKKLFVHHIQNAENGATVEFEKVLLVDNNGTVTVGAPTVEGAKVVCEVVSPLVKGDKVLVFHKKRRKGYRKLNGHRQQFTELTIKQVIA.

It belongs to the bacterial ribosomal protein bL21 family. As to quaternary structure, part of the 50S ribosomal subunit. Contacts protein L20.

Its function is as follows. This protein binds to 23S rRNA in the presence of protein L20. The chain is Large ribosomal subunit protein bL21 from Phocaeicola vulgatus (strain ATCC 8482 / DSM 1447 / JCM 5826 / CCUG 4940 / NBRC 14291 / NCTC 11154) (Bacteroides vulgatus).